We begin with the raw amino-acid sequence, 491 residues long: Chromosomal replication initiator protein DnaA (491 aa).

Positions 1 to 69 (MTTWDKCLKK…TIQECHGNDL (69 aa)) are domain I, interacts with DnaA modulators. Residues 69–154 (LIIEYSNKKF…KEDEEYSFGL (86 aa)) are domain II. A domain III, AAA+ region region spans residues 155-371 (PLKEKYVFDS…GALNRVLTTS (217 aa)). The ATP site is built by glycine 199, glycine 201, lysine 202, and threonine 203. The interval 372-491 (KFNHKDPTIE…YELLLDKISR (120 aa)) is domain IV, binds dsDNA.

The protein belongs to the DnaA family. In terms of assembly, oligomerizes as a right-handed, spiral filament on DNA at oriC.

Its subcellular location is the cytoplasm. Functionally, plays an essential role in the initiation and regulation of chromosomal replication. ATP-DnaA binds to the origin of replication (oriC) to initiate formation of the DNA replication initiation complex once per cell cycle. Binds the DnaA box (a 9 base pair repeat at the origin) and separates the double-stranded (ds)DNA. Forms a right-handed helical filament on oriC DNA; dsDNA binds to the exterior of the filament while single-stranded (ss)DNA is stabiized in the filament's interior. The ATP-DnaA-oriC complex binds and stabilizes one strand of the AT-rich DNA unwinding element (DUE), permitting loading of DNA polymerase. After initiation quickly degrades to an ADP-DnaA complex that is not apt for DNA replication. Binds acidic phospholipids. In Francisella tularensis subsp. holarctica (strain LVS), this protein is Chromosomal replication initiator protein DnaA.